The primary structure comprises 81 residues: uncharacterized protein (81 aa).

This sequence belongs to the ycf70 family.

It is found in the plastid. Its subcellular location is the chloroplast. This is an uncharacterized protein from Saccharum officinarum (Sugarcane).